The sequence spans 264 residues: Taurine import ATP-binding protein TauB (264 aa).

The region spanning 4 to 233 (LQLERISAQY…RYAAGESARA (230 aa)) is the ABC transporter domain. Residue 38–45 (GPSGSGKT) participates in ATP binding.

The protein belongs to the ABC transporter superfamily. Taurine importer (TC 3.A.1.17.1) family. In terms of assembly, the complex is composed of two ATP-binding proteins (TauB), two transmembrane proteins (TauC) and a solute-binding protein (TauA).

The protein localises to the cell inner membrane. It carries out the reaction taurine(out) + ATP + H2O = taurine(in) + ADP + phosphate + H(+). Functionally, part of the ABC transporter complex TauABC involved in taurine import. Responsible for energy coupling to the transport system. This is Taurine import ATP-binding protein TauB from Pseudomonas fluorescens (strain Pf0-1).